The chain runs to 507 residues: ATP synthase subunit alpha, chloroplastic (507 aa).

Residue 170-177 participates in ATP binding; the sequence is GDRQTGKT.

The protein belongs to the ATPase alpha/beta chains family. In terms of assembly, F-type ATPases have 2 components, CF(1) - the catalytic core - and CF(0) - the membrane proton channel. CF(1) has five subunits: alpha(3), beta(3), gamma(1), delta(1), epsilon(1). CF(0) has four main subunits: a, b, b' and c.

The protein resides in the plastid. It localises to the chloroplast thylakoid membrane. It catalyses the reaction ATP + H2O + 4 H(+)(in) = ADP + phosphate + 5 H(+)(out). Produces ATP from ADP in the presence of a proton gradient across the membrane. The alpha chain is a regulatory subunit. The chain is ATP synthase subunit alpha, chloroplastic from Buxus microphylla (Littleleaf boxwood).